Reading from the N-terminus, the 456-residue chain is MNTVRETIAAIATAQGRGGVGIVRLSGPLASQAGQAITGRTLTPRHAHYGPFRDADGLVLDEGIALFFPGPNSFTGEDVLELQGHGGPVVMDMLLQRCLQLGCRLARPGEFSERAFLNDKLDLAQAEAIADLIEASSTQAARNALRSLQGAFSKRVHGLTEALIALRIYVEAAIDFPEEEIDFLADGHVLRMLDDVRSELSTVQREAGQGALLRDGMTVVIAGRPNAGKSSLLNQLAGREAAIVTDIAGTTRDVLREHIHIDGMPLHVVDTAGLRDTDDHVEKIGVERALKAIGEADRVLLVVDSTAPEASDPFALWPEFLDQRPDVAKVTLIRNKADLSGEHVGMEQSDDGHVTITLSAREDDMGLDLLRDHLKACMGYEQTAESSFSARRRHLEALRQASAHLEHGRAQLTLAGAGELLAEDLRQAQQALGEITGAFSSDDLLGRIFSSFCIGK.

(6S)-5-formyl-5,6,7,8-tetrahydrofolate-binding residues include R24, E81, and K120. One can recognise a TrmE-type G domain in the interval 216–379 (GMTVVIAGRP…LRDHLKACMG (164 aa)). N226 contacts K(+). GTP is bound by residues 226–231 (NAGKSS), 245–251 (TDIAGTT), 270–273 (DTAG), 335–338 (NKAD), and 359–361 (SAR). Mg(2+) is bound at residue S230. Residues T245, I247, and T250 each contribute to the K(+) site. Position 251 (T251) interacts with Mg(2+). K456 contributes to the (6S)-5-formyl-5,6,7,8-tetrahydrofolate binding site.

This sequence belongs to the TRAFAC class TrmE-Era-EngA-EngB-Septin-like GTPase superfamily. TrmE GTPase family. As to quaternary structure, homodimer. Heterotetramer of two MnmE and two MnmG subunits. Requires K(+) as cofactor.

The protein localises to the cytoplasm. Exhibits a very high intrinsic GTPase hydrolysis rate. Involved in the addition of a carboxymethylaminomethyl (cmnm) group at the wobble position (U34) of certain tRNAs, forming tRNA-cmnm(5)s(2)U34. The polypeptide is tRNA modification GTPase MnmE (Pseudomonas entomophila (strain L48)).